The following is a 258-amino-acid chain: Ciliogenesis and planar polarity effector 2 (258 aa).

Positions 51–258 (IDTASYKIFV…LPSSPESAPG (208 aa)) are small GTPase-like. 12 residues coordinate GTP: serine 64, glycine 65, glycine 67, lysine 68, threonine 69, alanine 70, isoleucine 82, histidine 84, threonine 87, lysine 176, aspartate 178, and serine 206.

This sequence belongs to the small GTPase superfamily. Rab family. In terms of assembly, interacts with FUZ. Associates with the CPLANE (ciliogenesis and planar polarity effectors) complex via its interaction with FUZ.

It is found in the cytoplasm. It localises to the cytoskeleton. The protein resides in the cilium basal body. Its subcellular location is the microtubule organizing center. The protein localises to the centrosome. It is found in the centriole. In terms of biological role, required for efficient primary cilia initiation, regulating a late step in cilia initiation. Plays a role in the final maturation of the mother centriole and ciliary vesicle that allows extension of the ciliary axoneme. The protein is Ciliogenesis and planar polarity effector 2 (Cplane2) of Mus musculus (Mouse).